We begin with the raw amino-acid sequence, 198 residues long: Dual specificity protein phosphatase 14 (198 aa).

The region spanning 26 to 167 (GIAQITSSLF…LIDYESQLFG (142 aa)) is the Tyrosine-protein phosphatase domain. C111 (phosphocysteine intermediate) is an active-site residue.

This sequence belongs to the protein-tyrosine phosphatase family. Non-receptor class dual specificity subfamily.

The catalysed reaction is O-phospho-L-tyrosyl-[protein] + H2O = L-tyrosyl-[protein] + phosphate. It carries out the reaction O-phospho-L-seryl-[protein] + H2O = L-seryl-[protein] + phosphate. It catalyses the reaction O-phospho-L-threonyl-[protein] + H2O = L-threonyl-[protein] + phosphate. Involved in the inactivation of MAP kinases. Dephosphorylates ERK, JNK and p38 MAP-kinases. Plays a negative role in TCR signaling by dephosphorylating MAP3K7 adapter TAB1 leading to its inactivation. The polypeptide is Dual specificity protein phosphatase 14 (Dusp14) (Mus musculus (Mouse)).